We begin with the raw amino-acid sequence, 289 residues long: SNF1-related protein kinase regulatory subunit beta-2 (289 aa).

Residues 1–10 (MGNVNAREEA) show a composition bias toward basic and acidic residues. Residues 1-59 (MGNVNAREEANSNNASAVEDEDAEICSREAMSAASDGNHVAPPELMGQSPPHSPRATQS) are disordered. G2 carries the N-myristoyl glycine lipid modification. Residues 103–180 (PTMITWCHGG…AGNTFNILDL (78 aa)) form a kinase-interacting sequence (KIS) region. The tract at residues 217-289 (EPPVVPPHLQ…TVVLYKSLQR (73 aa)) is association with SNF1 complex (ASC).

The protein belongs to the 5'-AMP-activated protein kinase beta subunit family. As to quaternary structure, subunit of a probable heterotrimeric complex consisting of an alpha catalytic (KIN10 or KIN11) subunit, and a beta (KINB) and a gamma (KING or SNF4) non-catalytic regulatory subunits. Interacts with SNF4. Interacts with FLZ1, FLZ2, FLZ8, FLZ9, FLZ10, FLZ12, FLZ13 and FLZ14. Post-translationally, sumoylated. As to expression, expressed in leaves, stems, roots, flower buds and flowers. Not detectable in siliques.

The protein localises to the cell membrane. Regulatory subunit of the probable trimeric SNF1-related protein kinase (SnRK) complex, which may play a role in a signal transduction cascade regulating gene expression and carbohydrate metabolism in higher plants. The SnRK complex may also be involved in the regulation of fatty acid synthesis by phosphorylation of acetyl-CoA carboxylase and in assimilation of nitrogen by phosphorylating nitrate reductase. This is SNF1-related protein kinase regulatory subunit beta-2 (KINB2) from Arabidopsis thaliana (Mouse-ear cress).